The primary structure comprises 340 residues: Citramalyl-CoA lyase, mitochondrial (340 aa).

A mitochondrion-targeting transit peptide spans M1–K22. Substrate-binding residues include Y50, K57, and K61. 2 positions are modified to N6-acetyllysine: K57 and K61. Residues K82 and K92 each carry the N6-acetyllysine; alternate modification. N6-succinyllysine; alternate is present on residues K82 and K92. R107 provides a ligand contact to substrate. Mg(2+) contacts are provided by E171 and D206. I272–H273 provides a ligand contact to substrate. Position 309 is an N6-succinyllysine (K309). The active site involves D320.

This sequence belongs to the HpcH/HpaI aldolase family. Citrate lyase beta subunit-like subfamily. In terms of assembly, homotrimer. Requires Mg(2+) as cofactor.

It localises to the mitochondrion. The catalysed reaction is glyoxylate + acetyl-CoA + H2O = (S)-malate + CoA + H(+). It catalyses the reaction propanoyl-CoA + glyoxylate + H2O = 3-methylmalate + CoA + H(+). The enzyme catalyses (3S)-citramalyl-CoA = pyruvate + acetyl-CoA. It carries out the reaction (S)-malyl-CoA + H2O = (S)-malate + CoA + H(+). Mitochondrial citramalyl-CoA lyase indirectly involved in the vitamin B12 metabolism. Converts citramalyl-CoA into acetyl-CoA and pyruvate in the C5-dicarboxylate catabolism pathway. The C5-dicarboxylate catabolism pathway is required to detoxify itaconate, a vitamin B12-poisoning metabolite. Also acts as a malate synthase in vitro, converting glyoxylate and acetyl-CoA to malate. Also displays malyl-CoA thioesterase activity. Also acts as a beta-methylmalate synthase in vitro, by mediating conversion of glyoxylate and propionyl-CoA to beta-methylmalate. Also has very weak citramalate synthase activity in vitro. The polypeptide is Citramalyl-CoA lyase, mitochondrial (Homo sapiens (Human)).